The sequence spans 1090 residues: Pullulanase (1090 aa).

The signal sequence occupies residues 1–19 (MLRYTRNALVLGSLVLLSG). C20 is lipidated: N-palmitoyl cysteine. Residue C20 is the site of S-diacylglycerol cysteine attachment. D684 (nucleophile) is an active-site residue. Residue E713 is the Proton donor of the active site.

The protein belongs to the glycosyl hydrolase 13 family. In terms of assembly, homotrimer.

Its subcellular location is the cell membrane. The enzyme catalyses Hydrolysis of (1-&gt;6)-alpha-D-glucosidic linkages in pullulan, amylopectin and glycogen, and in the alpha- and beta-limit dextrins of amylopectin and glycogen.. In Klebsiella pneumoniae, this protein is Pullulanase (pulA).